We begin with the raw amino-acid sequence, 456 residues long: Bifunctional protein GlmU (456 aa).

Residues 1–227 (MKLRVVILAA…AQEVEGANNR (227 aa)) form a pyrophosphorylase region. UDP-N-acetyl-alpha-D-glucosamine contacts are provided by residues 8-11 (LAAG), Lys-22, Gln-73, 78-79 (GT), 100-102 (YGD), Gly-137, Glu-152, Asn-167, and Asn-225. Asp-102 lines the Mg(2+) pocket. Residue Asn-225 coordinates Mg(2+). The segment at 228–248 (QQLASLERALQQRQAEELMTQ) is linker. Positions 249 to 456 (GVTLIDPARF…WQRPQSKKGT (208 aa)) are N-acetyltransferase. Residues Arg-331 and Lys-349 each coordinate UDP-N-acetyl-alpha-D-glucosamine. Residue His-361 is the Proton acceptor of the active site. UDP-N-acetyl-alpha-D-glucosamine-binding residues include Tyr-364 and Asn-375. Acetyl-CoA contacts are provided by residues Ala-378, 384–385 (NY), Ser-403, Ala-421, and Arg-438.

The protein in the N-terminal section; belongs to the N-acetylglucosamine-1-phosphate uridyltransferase family. This sequence in the C-terminal section; belongs to the transferase hexapeptide repeat family. Homotrimer. It depends on Mg(2+) as a cofactor.

It is found in the cytoplasm. It carries out the reaction alpha-D-glucosamine 1-phosphate + acetyl-CoA = N-acetyl-alpha-D-glucosamine 1-phosphate + CoA + H(+). It catalyses the reaction N-acetyl-alpha-D-glucosamine 1-phosphate + UTP + H(+) = UDP-N-acetyl-alpha-D-glucosamine + diphosphate. It participates in nucleotide-sugar biosynthesis; UDP-N-acetyl-alpha-D-glucosamine biosynthesis; N-acetyl-alpha-D-glucosamine 1-phosphate from alpha-D-glucosamine 6-phosphate (route II): step 2/2. The protein operates within nucleotide-sugar biosynthesis; UDP-N-acetyl-alpha-D-glucosamine biosynthesis; UDP-N-acetyl-alpha-D-glucosamine from N-acetyl-alpha-D-glucosamine 1-phosphate: step 1/1. Its pathway is bacterial outer membrane biogenesis; LPS lipid A biosynthesis. Functionally, catalyzes the last two sequential reactions in the de novo biosynthetic pathway for UDP-N-acetylglucosamine (UDP-GlcNAc). The C-terminal domain catalyzes the transfer of acetyl group from acetyl coenzyme A to glucosamine-1-phosphate (GlcN-1-P) to produce N-acetylglucosamine-1-phosphate (GlcNAc-1-P), which is converted into UDP-GlcNAc by the transfer of uridine 5-monophosphate (from uridine 5-triphosphate), a reaction catalyzed by the N-terminal domain. This chain is Bifunctional protein GlmU, found in Idiomarina loihiensis (strain ATCC BAA-735 / DSM 15497 / L2-TR).